We begin with the raw amino-acid sequence, 68 residues long: MAVKFHLCLLLIILVGMGAHVAFADLPLCDYPYGACFYRADPCPDDMPVECPNYFYCPQQTDRCCCYE.

Residues 1–24 (MAVKFHLCLLLIILVGMGAHVAFA) form the signal peptide.

It belongs to the Cnidaria small cysteine-rich protein (SCRiP) family. gamma subfamily. In terms of processing, contains 4 disulfide bonds.

The protein localises to the secreted. The protein resides in the nematocyst. Functionally, induces neurotoxic symptoms on zebrafish. Has also been claimed to be implied in calcification, but tests on homolog proteins suggest that proteins of this family have a neurotoxic function and not a calcification function. In Orbicella faveolata (Mountainous star coral), this protein is Small cysteine-rich protein 5.